The following is a 311-amino-acid chain: Olfactory receptor 5P3 (311 aa).

The Extracellular segment spans residues 1–25 (MGTGNDTTVVEFTLLGLSEDTTVCA). An N-linked (GlcNAc...) asparagine glycan is attached at asparagine 5. Residues 26–46 (ILFLVFLGIYVVTLMGNISII) form a helical membrane-spanning segment. The Cytoplasmic portion of the chain corresponds to 47–54 (VLIRRSHH). A helical transmembrane segment spans residues 55 to 75 (LHTPMYIFLCHLAFVDIGYSS). The Extracellular portion of the chain corresponds to 76 to 99 (SVTPVMLMSFLRKETSLPVAGCVA). A disulfide bond links cysteine 97 and cysteine 189. A helical membrane pass occupies residues 100 to 120 (QLCSVVTFGTAECFLLAAMAY). Topologically, residues 121 to 139 (DRYVAICSPLLYSTCMSPG) are cytoplasmic. A helical membrane pass occupies residues 140 to 160 (VCIILVGMSYLGGCVNAWTFI). The Extracellular segment spans residues 161 to 196 (GCLLRLSFCGPNKVNHFFCDYSPLLKLACSHDFTFE). Residues 197–217 (IIPAISSGSIIVATVCVIAIS) traverse the membrane as a helical segment. The Cytoplasmic segment spans residues 218 to 237 (YIYILITILKMHSTKGRHKA). A helical transmembrane segment spans residues 238–258 (FSTCTSHLTAVTLFYGTITFI). The Extracellular portion of the chain corresponds to 259–271 (YVMPKSSYSTDQN). Residues 272–292 (KVVSVFYTVVIPMLNPLIYSL) form a helical membrane-spanning segment. Residues 293–311 (RNKEIKGALKRELRIKIFS) lie on the Cytoplasmic side of the membrane.

It belongs to the G-protein coupled receptor 1 family. Expressed in the tongue.

It is found in the cell membrane. Odorant receptor (Potential). May be involved in taste perception. This chain is Olfactory receptor 5P3 (OR5P3), found in Homo sapiens (Human).